The primary structure comprises 156 residues: 6,7-dimethyl-8-ribityllumazine synthase (156 aa).

5-amino-6-(D-ribitylamino)uracil-binding positions include Phe-25, 59–61, and 83–85; these read AFE and AVI. 88 to 89 provides a ligand contact to (2S)-2-hydroxy-3-oxobutyl phosphate; that stretch reads AT. His-91 serves as the catalytic Proton donor. Position 116 (Phe-116) interacts with 5-amino-6-(D-ribitylamino)uracil. Residue Arg-130 coordinates (2S)-2-hydroxy-3-oxobutyl phosphate.

This sequence belongs to the DMRL synthase family.

The enzyme catalyses (2S)-2-hydroxy-3-oxobutyl phosphate + 5-amino-6-(D-ribitylamino)uracil = 6,7-dimethyl-8-(1-D-ribityl)lumazine + phosphate + 2 H2O + H(+). It functions in the pathway cofactor biosynthesis; riboflavin biosynthesis; riboflavin from 2-hydroxy-3-oxobutyl phosphate and 5-amino-6-(D-ribitylamino)uracil: step 1/2. In terms of biological role, catalyzes the formation of 6,7-dimethyl-8-ribityllumazine by condensation of 5-amino-6-(D-ribitylamino)uracil with 3,4-dihydroxy-2-butanone 4-phosphate. This is the penultimate step in the biosynthesis of riboflavin. The sequence is that of 6,7-dimethyl-8-ribityllumazine synthase from Nitratidesulfovibrio vulgaris (strain ATCC 29579 / DSM 644 / CCUG 34227 / NCIMB 8303 / VKM B-1760 / Hildenborough) (Desulfovibrio vulgaris).